An 845-amino-acid chain; its full sequence is Protein kintoun (845 aa).

Over residues 362 to 382 the composition is skewed to basic and acidic residues; that stretch reads SKEQAQMHETLRHFSREDSGV. Disordered regions lie at residues 362–420, 575–691, and 773–845; these read SKEQ…PVRH, QALK…SMSD, and AQHR…EMDD. Serine 380 bears the Phosphoserine mark. A compositionally biased stretch (acidic residues) spans 391 to 400; sequence PVEEDPDGEL. Residues 584 to 593 show a composition bias toward basic and acidic residues; it reads GTKEEEKENQ. Basic residues predominate over residues 611 to 622; the sequence is KPGKKQRKRNKK. Polar residues predominate over residues 640–671; it reads LTKNSELQPKSTFNLPQRKQRSYSECNDSTGG. Serine 779 is subject to Phosphoserine. A compositionally biased stretch (polar residues) spans 794-804; the sequence is LKQQENQSRNC.

Belongs to the PIH1 family. Kintoun subfamily. As to quaternary structure, interacts with Pp1alpha-96A, Pp1-87B, Pp1-13C and flw.

The protein resides in the cytoplasm. Functionally, required for cytoplasmic pre-assembly of axonemal dyneins, thereby playing a central role in motility in cilia and flagella. Involved in pre-assembly of dynein arm complexes in the cytoplasm before intraflagellar transport loads them for the ciliary compartment. The chain is Protein kintoun from Drosophila erecta (Fruit fly).